The sequence spans 344 residues: AA9 family lytic polysaccharide monooxygenase D (344 aa).

Residues 1 to 23 form the signal peptide; it reads MKTATSYAAFLLSALAALPHASA. Residue histidine 24 coordinates Cu(2+). Cysteine 70 and cysteine 193 are oxidised to a cystine. O2 is bound at residue histidine 179. Tyrosine 190 lines the Cu(2+) pocket. N-linked (GlcNAc...) asparagine glycosylation is found at asparagine 201 and asparagine 207. Positions 240-321 are disordered; it reads PPLSNLVSGD…PTTSGNLSAN (82 aa). Positions 259 to 292 are enriched in low complexity; it reads STSSATLSGGAAPTGTASGSTPAGTSQPSSTTGT. Residues 311–320 show a composition bias toward polar residues; it reads APTTSGNLSA. N-linked (GlcNAc...) asparagine glycosylation is present at asparagine 317.

The protein belongs to the polysaccharide monooxygenase AA9 family. Cu(2+) is required as a cofactor.

Its subcellular location is the secreted. The catalysed reaction is [(1-&gt;4)-beta-D-glucosyl]n+m + reduced acceptor + O2 = 4-dehydro-beta-D-glucosyl-[(1-&gt;4)-beta-D-glucosyl]n-1 + [(1-&gt;4)-beta-D-glucosyl]m + acceptor + H2O.. In terms of biological role, lytic polysaccharide monooxygenase (LPMO) that depolymerizes crystalline and amorphous polysaccharides via the oxidation of scissile alpha- or beta-(1-4)-glycosidic bonds, yielding C1 or C4 oxidation products. Catalysis by LPMOs requires the reduction of the active-site copper from Cu(II) to Cu(I) by a reducing agent and H(2)O(2) or O(2) as a cosubstrate. The protein is AA9 family lytic polysaccharide monooxygenase D of Gloeophyllum trabeum (strain ATCC 11539 / FP-39264 / Madison 617) (Brown rot fungus).